The sequence spans 211 residues: uncharacterized protein (211 aa).

Positions 155-211 are disordered; it reads AAENASEEGDKKQIITDSGKLPETEELTETTNEDLDIKQFSPYSSESSANVSSYNKS. Acidic residues predominate over residues 178-188; that stretch reads TEELTETTNED. Low complexity predominate over residues 195 to 211; that stretch reads SPYSSESSANVSSYNKS.

This is an uncharacterized protein from Schizosaccharomyces pombe (strain 972 / ATCC 24843) (Fission yeast).